We begin with the raw amino-acid sequence, 401 residues long: Rho-N domain-containing protein 1, chloroplastic (401 aa).

The N-terminal 63 residues, Met1 to Arg63, are a transit peptide targeting the chloroplast. Disordered regions lie at residues Pro73–Arg129 and Lys180–Val361. Polar residues-rich tracts occupy residues Asp102 to Pro126, Thr210 to Ala223, and Pro240 to Thr265. Positions Gln266–Glu290 are enriched in basic and acidic residues. Positions Leu339 to Glu358 are enriched in acidic residues. Positions Leu339–Glu371 form a coiled coil.

Homodimer or homomultimer. Part of a chloroplastic degradosome-like complex. Interacts with RNE.

The protein localises to the plastid. The protein resides in the chloroplast. Binds to and supports processing of specific plastid RNAs. Associates via its C-terminal Rho-N domain to single stranded regions of 16S and 23S rRNAs or to rbcL mRNAs. May be involved in targeting transcripts to RNases such as RNE or RNase J. This chain is Rho-N domain-containing protein 1, chloroplastic (RHON1), found in Arabidopsis thaliana (Mouse-ear cress).